A 92-amino-acid chain; its full sequence is Defensin alpha 4 (92 aa).

A signal peptide spans 1–19 (MKTLVLLSALVLLAFQVQA). A propeptide spanning residues 20 to 58 (DPIQNTDEETKTEEQPGEEDQAVSISFGGQEGSALHEKS) is cleaved from the precursor. Residues 23–42 (QNTDEETKTEEQPGEEDQAV) form a disordered region. 3 disulfide bridges follow: Cys-64-Cys-89, Cys-66-Cys-81, and Cys-71-Cys-88.

Belongs to the alpha-defensin family. As to expression, paneth cells of the small bowel.

The protein localises to the secreted. Its subcellular location is the cytoplasmic vesicle. It localises to the secretory vesicle. In terms of biological role, host-defense peptide that has antimicrobial activity. Exhibits activity against Gram-negative E.coli (in vitro). Probably contributes to the antimicrobial barrier function of the small bowel mucosa. This chain is Defensin alpha 4, found in Mus musculus (Mouse).